The following is a 270-amino-acid chain: Putative carboxymethylenebutenolidase (270 aa).

Residues C147, D204, and H236 contribute to the active site.

The protein belongs to the dienelactone hydrolase family.

The catalysed reaction is 2-(5-oxo-2,5-dihydrofuran-2-ylidene)acetate + H2O = 4-oxohex-2-enedioate + H(+). The protein is Putative carboxymethylenebutenolidase (ysgA) of Salmonella typhi.